A 189-amino-acid polypeptide reads, in one-letter code: Small ribosomal subunit protein uS5 (189 aa).

The S5 DRBM domain occupies 22–85; sequence FVDKLVAINR…EAAKRDLIFV (64 aa).

Belongs to the universal ribosomal protein uS5 family. As to quaternary structure, part of the 30S ribosomal subunit. Contacts proteins S4 and S8.

Functionally, with S4 and S12 plays an important role in translational accuracy. Located at the back of the 30S subunit body where it stabilizes the conformation of the head with respect to the body. This Sinorhizobium medicae (strain WSM419) (Ensifer medicae) protein is Small ribosomal subunit protein uS5.